The primary structure comprises 61 residues: Lens epithelial cell protein LEP503 (61 aa).

This is Lens epithelial cell protein LEP503 (Lenep) from Mus musculus (Mouse).